The following is a 184-amino-acid chain: Large ribosomal subunit protein uL6 (184 aa).

This sequence belongs to the universal ribosomal protein uL6 family. In terms of assembly, part of the 50S ribosomal subunit.

Functionally, this protein binds to the 23S rRNA, and is important in its secondary structure. It is located near the subunit interface in the base of the L7/L12 stalk, and near the tRNA binding site of the peptidyltransferase center. The sequence is that of Large ribosomal subunit protein uL6 from Salinibacter ruber (strain DSM 13855 / M31).